A 359-amino-acid chain; its full sequence is DNA polymerase IV (359 aa).

One can recognise a UmuC domain in the interval 7–188 (IIHIDMDAFY…IPIGKFFGVG (182 aa)). Residues aspartate 11 and aspartate 106 each coordinate Mg(2+). Residue glutamate 107 is part of the active site.

The protein belongs to the DNA polymerase type-Y family. In terms of assembly, monomer. Mg(2+) serves as cofactor.

It localises to the cytoplasm. The enzyme catalyses DNA(n) + a 2'-deoxyribonucleoside 5'-triphosphate = DNA(n+1) + diphosphate. Poorly processive, error-prone DNA polymerase involved in untargeted mutagenesis. Copies undamaged DNA at stalled replication forks, which arise in vivo from mismatched or misaligned primer ends. These misaligned primers can be extended by PolIV. Exhibits no 3'-5' exonuclease (proofreading) activity. May be involved in translesional synthesis, in conjunction with the beta clamp from PolIII. The sequence is that of DNA polymerase IV from Clostridium perfringens (strain ATCC 13124 / DSM 756 / JCM 1290 / NCIMB 6125 / NCTC 8237 / Type A).